Consider the following 865-residue polypeptide: Adenylate cyclase (865 aa).

The catalytic stretch occupies residues 1–540 (MYLYIETLKQ…DISSHFPIRL (540 aa)). The regulatory stretch occupies residues 546 to 865 (KALYSPCEIR…FNDYQAVHHH (320 aa)).

Belongs to the adenylyl cyclase class-1 family.

It is found in the cytoplasm. The catalysed reaction is ATP = 3',5'-cyclic AMP + diphosphate. This is Adenylate cyclase (cya) from Proteus mirabilis.